Here is a 311-residue protein sequence, read N- to C-terminus: N-acetylmuramic acid 6-phosphate etherase (311 aa).

Positions 64-227 constitute an SIS domain; that stretch reads IYQRLIDNGR…SSGVMIKLGK (164 aa). Glu-92 acts as the Proton donor in catalysis. Glu-123 is an active-site residue.

It belongs to the GCKR-like family. MurNAc-6-P etherase subfamily. In terms of assembly, homodimer.

It catalyses the reaction N-acetyl-D-muramate 6-phosphate + H2O = N-acetyl-D-glucosamine 6-phosphate + (R)-lactate. It participates in amino-sugar metabolism; N-acetylmuramate degradation. Functionally, specifically catalyzes the cleavage of the D-lactyl ether substituent of MurNAc 6-phosphate, producing GlcNAc 6-phosphate and D-lactate. The protein is N-acetylmuramic acid 6-phosphate etherase of Prochlorococcus marinus (strain SARG / CCMP1375 / SS120).